The following is a 298-amino-acid chain: tRNA dimethylallyltransferase (298 aa).

Position 12 to 19 (12 to 19) interacts with ATP; the sequence is GPTASGKT. 14–19 lines the substrate pocket; sequence TASGKT. The interval 37–40 is interaction with substrate tRNA; that stretch reads DSRQ.

This sequence belongs to the IPP transferase family. As to quaternary structure, monomer. The cofactor is Mg(2+).

The catalysed reaction is adenosine(37) in tRNA + dimethylallyl diphosphate = N(6)-dimethylallyladenosine(37) in tRNA + diphosphate. Catalyzes the transfer of a dimethylallyl group onto the adenine at position 37 in tRNAs that read codons beginning with uridine, leading to the formation of N6-(dimethylallyl)adenosine (i(6)A). This is tRNA dimethylallyltransferase from Synechococcus sp. (strain CC9902).